Reading from the N-terminus, the 621-residue chain is Polycystin-2-like protein 2 (621 aa).

Over 1–31 (MSEATWWYRGGTSKHDLHYRREAEVNTTLEE) the chain is Cytoplasmic. A helical membrane pass occupies residues 32 to 52 (LLLYFIFLINLCILTFGMVNP). The Extracellular portion of the chain corresponds to 53 to 277 (HMYYLNKVMS…SVKLLRYVSY (225 aa)). N-linked (GlcNAc...) asparagine glycans are attached at residues Asn-115 and Asn-138. A helical membrane pass occupies residues 278-298 (YDYFIASCEVIFCIFLFVFII). The Cytoplasmic segment spans residues 299–314 (QELRKVNEFKSAYFRS). The helical transmembrane segment at 315–335 (VWNWLEMLLLLLCFLAVSFYA) threads the bilayer. Topologically, residues 336-360 (YCNMQSFLLLGQLLKNTDSYPDFYF) are extracellular. Residues 361–381 (LAYWHIYYNNVIAITIFFAWI) traverse the membrane as a helical segment. The Cytoplasmic segment spans residues 382 to 406 (KIFKFISFNETMSQLSSTLSRCMKD). A helical transmembrane segment spans residues 407 to 427 (IVGFAIMFFIIFSAYAQLGFL). Topologically, residues 428-468 (VFGSQVDDFSTFQNSIFAQFRIVLGDFNFAGIQQANWILGP) are extracellular. Residues 469–489 (IYFITFIFFVFFVLLNMFLAI) traverse the membrane as a helical segment. At 490–621 (INDTYSEVKA…KLNQLMRKLH (132 aa)) the chain is on the cytoplasmic side. Residues 521-551 (NVLEKLRLKKAQAKEEKKMQTTDLAQRARRD) adopt a coiled-coil conformation.

This sequence belongs to the polycystin family. As to quaternary structure, interacts with TRPC1 and TRPC5. Expressed only in testis and heart.

It localises to the membrane. Its function is as follows. Exhibits a lower single conductance but no spontaneous channel activity. May function as a regulator of calcium channels or a channel component involving Ca2(+) homeostasis. This is Polycystin-2-like protein 2 from Mus musculus (Mouse).